The primary structure comprises 333 residues: Ornithine carbamoyltransferase (333 aa).

Residues 57–60, R108, and 135–138 contribute to the carbamoyl phosphate site; these read STRT and HPTQ. Residues N168, D232, and 236-237 contribute to the L-ornithine site; that span reads SM. Carbamoyl phosphate-binding positions include 274–275 and R319; that span reads CL.

It belongs to the aspartate/ornithine carbamoyltransferase superfamily. OTCase family.

It localises to the cytoplasm. It carries out the reaction carbamoyl phosphate + L-ornithine = L-citrulline + phosphate + H(+). Its pathway is amino-acid degradation; L-arginine degradation via ADI pathway; carbamoyl phosphate from L-arginine: step 2/2. In terms of biological role, reversibly catalyzes the transfer of the carbamoyl group from carbamoyl phosphate (CP) to the N(epsilon) atom of ornithine (ORN) to produce L-citrulline. The polypeptide is Ornithine carbamoyltransferase (Pediococcus pentosaceus (strain ATCC 25745 / CCUG 21536 / LMG 10740 / 183-1w)).